We begin with the raw amino-acid sequence, 713 residues long: Polyribonucleotide nucleotidyltransferase (713 aa).

Mg(2+) is bound by residues D491 and D497. The region spanning 558–617 (PRMITIKINPEKIRDVIGKGGSVIRALTEETGTTIDISDDGVVTIASTSSDGMAEAKKRI) is the KH domain. The region spanning 627–695 (GQVYEGTVLK…EKGRVRLSAK (69 aa)) is the S1 motif domain.

The protein belongs to the polyribonucleotide nucleotidyltransferase family. Mg(2+) is required as a cofactor.

It localises to the cytoplasm. The enzyme catalyses RNA(n+1) + phosphate = RNA(n) + a ribonucleoside 5'-diphosphate. Its function is as follows. Involved in mRNA degradation. Catalyzes the phosphorolysis of single-stranded polyribonucleotides processively in the 3'- to 5'-direction. This Burkholderia cenocepacia (strain ATCC BAA-245 / DSM 16553 / LMG 16656 / NCTC 13227 / J2315 / CF5610) (Burkholderia cepacia (strain J2315)) protein is Polyribonucleotide nucleotidyltransferase.